The chain runs to 595 residues: Putative histone-lysine N-methyltransferase PRDM6 (595 aa).

Residues 27-90 (FPHGGAGPLK…STPASSSTSA (64 aa)) are disordered. Gly residues predominate over residues 30-40 (GGAGPLKGSGA). Pro residues predominate over residues 49–59 (PLQPPPPPPPP). A compositionally biased stretch (low complexity) spans 71 to 90 (PRPASLSSASSTPASSSTSA). The SET domain occupies 246–365 (REVCLCTSTV…RGTELLVWYN (120 aa)). A C2H2-type 1; degenerate zinc finger spans residues 473 to 495 (WKCGQCFKTFTQRILLQMHVCTQ). 2 C2H2-type zinc fingers span residues 501-523 (YQCG…VVTH) and 529-551 (FKCG…IRTH). The segment at 557 to 579 (FKCERCERSFTQATQLSRHQRMP) adopts a C2H2-type 4; degenerate zinc-finger fold.

It belongs to the class V-like SAM-binding methyltransferase superfamily. As to quaternary structure, interacts with HDAC1, HDAC2, HDAC3, CBX1 and EP300.

The protein resides in the nucleus. It catalyses the reaction L-lysyl(20)-[histone H4] + S-adenosyl-L-methionine = N(6)-methyl-L-lysyl(20)-[histone H4] + S-adenosyl-L-homocysteine + H(+). Putative histone methyltransferase that acts as a transcriptional repressor of smooth muscle gene expression. Promotes the transition from differentiated to proliferative smooth muscle by suppressing differentiation and maintaining the proliferative potential of vascular smooth muscle cells. Also plays a role in endothelial cells by inhibiting endothelial cell proliferation, survival and differentiation. It is unclear whether it has histone methyltransferase activity in vivo. According to some authors, it does not act as a histone methyltransferase by itself and represses transcription by recruiting EHMT2/G9a. According to others, it possesses histone methyltransferase activity when associated with other proteins and specifically methylates 'Lys-20' of histone H4 in vitro. 'Lys-20' methylation represents a specific tag for epigenetic transcriptional repression. This is Putative histone-lysine N-methyltransferase PRDM6 (PRDM6) from Homo sapiens (Human).